We begin with the raw amino-acid sequence, 213 residues long: Uridine kinase (213 aa).

Residue 13–20 (GASASGKS) participates in ATP binding.

The protein belongs to the uridine kinase family.

The protein resides in the cytoplasm. The enzyme catalyses uridine + ATP = UMP + ADP + H(+). It carries out the reaction cytidine + ATP = CMP + ADP + H(+). It participates in pyrimidine metabolism; CTP biosynthesis via salvage pathway; CTP from cytidine: step 1/3. It functions in the pathway pyrimidine metabolism; UMP biosynthesis via salvage pathway; UMP from uridine: step 1/1. The sequence is that of Uridine kinase from Haemophilus influenzae (strain PittGG).